The following is a 108-amino-acid chain: U-scoloptoxin(16)-Er10a (108 aa).

The N-terminal stretch at 1 to 24 (MASFTSFCVLFTFCLLLLAHQARS) is a signal peptide.

The protein belongs to the scoloptoxin-16 family. In terms of processing, contains 4 disulfide bonds. Expressed by the venom gland.

Its subcellular location is the secreted. This Ethmostigmus rubripes (Giant centipede) protein is U-scoloptoxin(16)-Er10a.